The chain runs to 510 residues: ATP synthase subunit alpha (510 aa).

169-176 is an ATP binding site; the sequence is GDRQTGKT.

The protein belongs to the ATPase alpha/beta chains family. In terms of assembly, F-type ATPases have 2 components, CF(1) - the catalytic core - and CF(0) - the membrane proton channel. CF(1) has five subunits: alpha(3), beta(3), gamma(1), delta(1), epsilon(1). CF(0) has three main subunits: a(1), b(2) and c(9-12). The alpha and beta chains form an alternating ring which encloses part of the gamma chain. CF(1) is attached to CF(0) by a central stalk formed by the gamma and epsilon chains, while a peripheral stalk is formed by the delta and b chains.

It localises to the cell inner membrane. It catalyses the reaction ATP + H2O + 4 H(+)(in) = ADP + phosphate + 5 H(+)(out). Produces ATP from ADP in the presence of a proton gradient across the membrane. The alpha chain is a regulatory subunit. This chain is ATP synthase subunit alpha, found in Methylobacterium radiotolerans (strain ATCC 27329 / DSM 1819 / JCM 2831 / NBRC 15690 / NCIMB 10815 / 0-1).